Reading from the N-terminus, the 61-residue chain is Metallothionein-1H (61 aa).

N-acetylmethionine is present on methionine 1. A beta region spans residues 1 to 29; that stretch reads MDPNCSCEAGGSCACAGSCKCKKCKCTSC. Residues cysteine 5, cysteine 7, cysteine 13, cysteine 15, cysteine 19, cysteine 21, cysteine 24, cysteine 26, cysteine 29, cysteine 33, cysteine 34, cysteine 36, cysteine 37, cysteine 41, cysteine 44, cysteine 48, cysteine 50, and cysteine 57 each contribute to the a divalent metal cation site. The interval 30–61 is alpha; that stretch reads KKSCCSCCPLGCAKCAQGCICKGASEKCSCCA. Phosphoserine is present on serine 58. 2 residues coordinate a divalent metal cation: cysteine 59 and cysteine 60.

Belongs to the metallothionein superfamily. Type 1 family. Monomer.

Functionally, metallothioneins have a high content of cysteine residues that bind various heavy metals; these proteins are transcriptionally regulated by both heavy metals and glucocorticoids. In Homo sapiens (Human), this protein is Metallothionein-1H (MT1H).